Reading from the N-terminus, the 630-residue chain is Pro-interleukin-16 (630 aa).

Disordered regions lie at residues 30-268 (ENPG…FPLT) and 316-343 (PKEG…ASDT). Residues 129-143 (IRASSSSSIKQRISS) are compositionally biased toward low complexity. Residue Ser-220 is modified to Phosphoserine. Residues 321–343 (SPTSSSNEDSAANGSAETSASDT) show a composition bias toward polar residues. The interaction with PPP1R12A, PPP1R12B and PPP1R12C stretch occupies residues 404–500 (KQLDSIHVTI…IVTRKLTAES (97 aa)). PDZ domains are found at residues 410-495 (HVTI…VTRK) and 532-617 (TVTL…IRRK).

As to quaternary structure, homotetramer. Pro-interleukin-16 interacts (via PDZ 2 domain) with PPP1R12A, PPP1R12B and PPP1R12C. Pro-interleukin-16 interacts with GRIN2A. Pro-interleukin-16 interacts with GABPB1. Pro-interleukin-16 interacts (via PDZ 3 domain) with HDAC3.

It is found in the secreted. The protein resides in the cytoplasm. The protein localises to the nucleus. Its function is as follows. Interleukin-16 stimulates a migratory response in CD4+ lymphocytes, monocytes, and eosinophils. Primes CD4+ T-cells for IL-2 and IL-15 responsiveness. Also induces T-lymphocyte expression of interleukin 2 receptor. Ligand for CD4. Functionally, pro-interleukin-16 is involved in cell cycle progression in T-cells. Appears to be involved in transcriptional regulation of SKP2 and is probably part of a transcriptional repression complex on the core promoter of the SKP2 gene. May act as a scaffold for GABPB1 (the DNA-binding subunit the GABP transcription factor complex) and HDAC3 thus maintaining transcriptional repression and blocking cell cycle progression in resting T-cells. The polypeptide is Pro-interleukin-16 (IL16) (Macaca fascicularis (Crab-eating macaque)).